An 876-amino-acid polypeptide reads, in one-letter code: Senescence-induced receptor-like serine/threonine-protein kinase (876 aa).

An N-terminal signal peptide occupies residues 1 to 24 (MAMLKSLSSILFTSFALLFFLVHA). Topologically, residues 25-517 (QDQSGFISID…SNTKKKNKNG (493 aa)) are extracellular. LRR repeat units lie at residues 415 to 438 (RVVSLNISFSELRGQIDPAFSNLT), 439 to 462 (SIRKLDLSGNTLTGEIPAFLANLP), and 463 to 483 (NLTELNVEGNKLTGIVPQRLH). A helical membrane pass occupies residues 518–538 (YIIPLVVVGIIVVLLTALALF). The Cytoplasmic portion of the chain corresponds to 539–876 (RRFKKKQQRG…LDTEMVPRAR (338 aa)). The region spanning 574 to 847 (NNFERVIGKG…VVMELKQIVY (274 aa)) is the Protein kinase domain. ATP is bound by residues 580–588 (IGKGGFGKV) and lysine 601. Residue tyrosine 646 is modified to Phosphotyrosine. Aspartate 697 serves as the catalytic Proton acceptor. The residue at position 731 (serine 731) is a Phosphoserine. Threonine 732 carries the phosphothreonine modification. Phosphotyrosine is present on tyrosine 745.

Belongs to the protein kinase superfamily. Ser/Thr protein kinase family.

It localises to the membrane. In terms of biological role, involved in innate immune response of plants. In Arabidopsis thaliana (Mouse-ear cress), this protein is Senescence-induced receptor-like serine/threonine-protein kinase (SIRK).